The following is a 333-amino-acid chain: Ketol-acid reductoisomerase (NADP(+)) (333 aa).

The KARI N-terminal Rossmann domain maps to 2–182 (AKLYYEKDCN…GGARAGVLKT (181 aa)). NADP(+) is bound by residues 25-28 (YGSQ), Ser51, Ser53, and 83-86 (DEKQ). His108 is a catalytic residue. NADP(+) is bound at residue Gly134. The region spanning 183-328 (TFKEETETDL…KELRDMMSWS (146 aa)) is the KARI C-terminal knotted domain. Residues Asp191, Glu195, Glu227, and Glu231 each coordinate Mg(2+). Ser252 serves as a coordination point for substrate.

The protein belongs to the ketol-acid reductoisomerase family. Mg(2+) is required as a cofactor.

It carries out the reaction (2R)-2,3-dihydroxy-3-methylbutanoate + NADP(+) = (2S)-2-acetolactate + NADPH + H(+). It catalyses the reaction (2R,3R)-2,3-dihydroxy-3-methylpentanoate + NADP(+) = (S)-2-ethyl-2-hydroxy-3-oxobutanoate + NADPH + H(+). The protein operates within amino-acid biosynthesis; L-isoleucine biosynthesis; L-isoleucine from 2-oxobutanoate: step 2/4. Its pathway is amino-acid biosynthesis; L-valine biosynthesis; L-valine from pyruvate: step 2/4. Involved in the biosynthesis of branched-chain amino acids (BCAA). Catalyzes an alkyl-migration followed by a ketol-acid reduction of (S)-2-acetolactate (S2AL) to yield (R)-2,3-dihydroxy-isovalerate. In the isomerase reaction, S2AL is rearranged via a Mg-dependent methyl migration to produce 3-hydroxy-3-methyl-2-ketobutyrate (HMKB). In the reductase reaction, this 2-ketoacid undergoes a metal-dependent reduction by NADPH to yield (R)-2,3-dihydroxy-isovalerate. The sequence is that of Ketol-acid reductoisomerase (NADP(+)) from Alkaliphilus metalliredigens (strain QYMF).